The primary structure comprises 166 residues: Large ribosomal subunit protein uL10 (166 aa).

As to quaternary structure, part of the ribosomal stalk of the 50S ribosomal subunit. The N-terminus interacts with L11 and 23S rRNA to form the base of the stalk. The C-terminus forms an elongated spine to which L12 dimers bind in a sequential fashion forming a pentameric L10(L12)2(L12)2 complex.

Its function is as follows. Forms part of the ribosomal stalk, playing a central role in the interaction of the ribosome with GTP-bound translation factors (such as IF-2, EF-Tu, EF-G and RF3). The polypeptide is Large ribosomal subunit protein uL10 (rplJ) (Bacillus subtilis (strain 168)).